A 150-amino-acid polypeptide reads, in one-letter code: Ribosome maturation factor RimP (150 aa).

It belongs to the RimP family.

Its subcellular location is the cytoplasm. Functionally, required for maturation of 30S ribosomal subunits. This Salmonella dublin (strain CT_02021853) protein is Ribosome maturation factor RimP.